Reading from the N-terminus, the 287-residue chain is Phycobilisome 32.1 kDa linker polypeptide, phycocyanin-associated, rod (287 aa).

The PBS-linker domain maps to 2-180 (AITAAASRLG…LYRGYANSDR (179 aa)). A CpcD-like domain is found at 235–287 (GRVYRIEVAGIRQPGYPGVRRSSTAFLVPYEQLSAKMQQLQRTGARIISVNPA).

The protein belongs to the phycobilisome linker protein family.

The protein localises to the cellular thylakoid membrane. In terms of biological role, rod linker protein, associated with phycocyanin. Linker polypeptides determine the state of aggregation and the location of the disk-shaped phycobiliprotein units within the phycobilisome and modulate their spectroscopic properties in order to mediate a directed and optimal energy transfer. The chain is Phycobilisome 32.1 kDa linker polypeptide, phycocyanin-associated, rod (cpcC) from Thermosynechococcus vestitus (strain NIES-2133 / IAM M-273 / BP-1).